A 446-amino-acid chain; its full sequence is Phosphoglucosamine mutase (446 aa).

Serine 102 acts as the Phosphoserine intermediate in catalysis. Mg(2+)-binding residues include serine 102, aspartate 241, aspartate 243, and aspartate 245. Serine 102 is modified (phosphoserine).

The protein belongs to the phosphohexose mutase family. Mg(2+) is required as a cofactor. In terms of processing, activated by phosphorylation.

It catalyses the reaction alpha-D-glucosamine 1-phosphate = D-glucosamine 6-phosphate. Its function is as follows. Catalyzes the conversion of glucosamine-6-phosphate to glucosamine-1-phosphate. This is Phosphoglucosamine mutase from Xylella fastidiosa (strain M23).